A 431-amino-acid chain; its full sequence is tRNA(Ile)-lysidine synthase (431 aa).

Residue 25–30 (SGGLDS) coordinates ATP.

The protein belongs to the tRNA(Ile)-lysidine synthase family.

It is found in the cytoplasm. It catalyses the reaction cytidine(34) in tRNA(Ile2) + L-lysine + ATP = lysidine(34) in tRNA(Ile2) + AMP + diphosphate + H(+). In terms of biological role, ligates lysine onto the cytidine present at position 34 of the AUA codon-specific tRNA(Ile) that contains the anticodon CAU, in an ATP-dependent manner. Cytidine is converted to lysidine, thus changing the amino acid specificity of the tRNA from methionine to isoleucine. This chain is tRNA(Ile)-lysidine synthase, found in Legionella pneumophila (strain Paris).